Here is a 291-residue protein sequence, read N- to C-terminus: Pentonolactonase XacC (291 aa).

A divalent metal cation contacts are provided by glutamate 15, asparagine 141, and aspartate 191. Aspartate 191 acts as the Proton donor/acceptor in catalysis.

It belongs to the SMP-30/CGR1 family. As to quaternary structure, monomer. It depends on a divalent metal cation as a cofactor.

It carries out the reaction L-arabinono-1,4-lactone + H2O = L-arabinonate + H(+). The catalysed reaction is D-xylono-1,4-lactone + H2O = D-xylonate + H(+). It participates in carbohydrate degradation. Its function is as follows. Pentonolactonase involved in D-arabinose and D-xylose catabolism. Catalyzes the hydrolysis of both L-arabino-gamma-lactone and D-xylono-gamma-lactone to the corresponding acids. Can also hydrolyze D-galactono-gamma-lactone and D-glucono-delta-lactone. The chain is Pentonolactonase XacC from Haloferax volcanii (strain ATCC 29605 / DSM 3757 / JCM 8879 / NBRC 14742 / NCIMB 2012 / VKM B-1768 / DS2) (Halobacterium volcanii).